A 368-amino-acid polypeptide reads, in one-letter code: Isocitrate dehydrogenase [NAD] regulatory subunit 3, mitochondrial (368 aa).

Residues 1-26 (MARRSVSIFNRLLANPPSPFTSLSRS) constitute a mitochondrion transit peptide.

This sequence belongs to the isocitrate and isopropylmalate dehydrogenases family. As to quaternary structure, heterooligomer of catalytic and regulatory subunits. Interacts with 14-3-3-like proteins GRF1 GRF3 and GRF8. As to expression, mainly expressed at a low level in pollen.

The protein resides in the mitochondrion. Its function is as follows. Performs an essential role in the oxidative function of the citric acid cycle. This Arabidopsis thaliana (Mouse-ear cress) protein is Isocitrate dehydrogenase [NAD] regulatory subunit 3, mitochondrial (IDH3).